Consider the following 174-residue polypeptide: Translation initiation factor IF-3 (174 aa).

Belongs to the IF-3 family. Monomer.

It is found in the cytoplasm. IF-3 binds to the 30S ribosomal subunit and shifts the equilibrium between 70S ribosomes and their 50S and 30S subunits in favor of the free subunits, thus enhancing the availability of 30S subunits on which protein synthesis initiation begins. The polypeptide is Translation initiation factor IF-3 (Xanthobacter autotrophicus (strain ATCC BAA-1158 / Py2)).